The following is a 1200-amino-acid chain: Zinc finger protein 804A (1200 aa).

The C2H2-type zinc-finger motif lies at 57–81 (FYCELCDKQYYKHQEFDNHINSYDH). 6 disordered regions span residues 252–280 (STSH…PEAM), 343–367 (DGPV…RTSA), 582–687 (HWFH…NCGG), 727–777 (EDDG…SDES), 799–828 (QPKK…NYPM), and 874–949 (PYNP…TNPE). Over residues 585 to 603 (HKSRRKKKRRKLCRYHPGK) the composition is skewed to basic residues. The segment covering 604-666 (SSKEPEGSGK…ASTHLGEKET (63 aa)) has biased composition (basic and acidic residues). Composition is skewed to polar residues over residues 667-687 (MNTT…NCGG) and 732-756 (LASQ…SLTN). The segment covering 800 to 811 (PKKKRRRKRSRL) has biased composition (basic residues). Residues 891 to 944 (TETTPCDSSQTSNDLATPVNVTRDPSNSTTDNTLLEHNQRSQTTNSNEKQTPFK) are compositionally biased toward polar residues.

This Mus musculus (Mouse) protein is Zinc finger protein 804A (Znf804a).